Consider the following 537-residue polypeptide: Arginine--tRNA ligase (537 aa).

A 'HIGH' region motif is present at residues 113-123 (ANPTGRIHLGH).

Belongs to the class-I aminoacyl-tRNA synthetase family. As to quaternary structure, monomer.

Its subcellular location is the cytoplasm. It catalyses the reaction tRNA(Arg) + L-arginine + ATP = L-arginyl-tRNA(Arg) + AMP + diphosphate. In Mycoplasma genitalium (strain ATCC 33530 / DSM 19775 / NCTC 10195 / G37) (Mycoplasmoides genitalium), this protein is Arginine--tRNA ligase (argS).